A 186-amino-acid polypeptide reads, in one-letter code: Putative inactive recombination-promoting nuclease-like protein YjiQ (186 aa).

Belongs to the Rpn/YhgA-like nuclease family.

Functionally, this pseudogene is the C-terminal fragment of low activity DNA endonuclease RpnD which probably yields 3'-hydroxyl ends. The intact protein can be seen in this entry (AC B7NGZ6). Expression of the repaired protein increases the frequency of recA-independent recombination, but also decreases viability probably via DNA damage; in a RecA strain expression has no effect on viability but does induce the SOS repair response. May play a role in horizontal gene transfer. This chain is Putative inactive recombination-promoting nuclease-like protein YjiQ (yjiQ), found in Escherichia coli (strain K12).